Here is a 383-residue protein sequence, read N- to C-terminus: 4-hydroxy-3-methylbut-2-en-1-yl diphosphate synthase (flavodoxin) (383 aa).

[4Fe-4S] cluster-binding residues include Cys-275, Cys-278, Cys-310, and Glu-317.

Belongs to the IspG family. The cofactor is [4Fe-4S] cluster.

It carries out the reaction (2E)-4-hydroxy-3-methylbut-2-enyl diphosphate + oxidized [flavodoxin] + H2O + 2 H(+) = 2-C-methyl-D-erythritol 2,4-cyclic diphosphate + reduced [flavodoxin]. Its pathway is isoprenoid biosynthesis; isopentenyl diphosphate biosynthesis via DXP pathway; isopentenyl diphosphate from 1-deoxy-D-xylulose 5-phosphate: step 5/6. Its function is as follows. Converts 2C-methyl-D-erythritol 2,4-cyclodiphosphate (ME-2,4cPP) into 1-hydroxy-2-methyl-2-(E)-butenyl 4-diphosphate. The polypeptide is 4-hydroxy-3-methylbut-2-en-1-yl diphosphate synthase (flavodoxin) (Dinoroseobacter shibae (strain DSM 16493 / NCIMB 14021 / DFL 12)).